A 100-amino-acid polypeptide reads, in one-letter code: NADH-quinone oxidoreductase subunit K (100 aa).

3 helical membrane passes run 4–24 (ITYYLLLAAALFCMGMFGVLV), 29–49 (LVVFMSVELMLNAANLTFVAF), and 63–83 (FFVIAVAAAEAAIGLAIVIAV).

Belongs to the complex I subunit 4L family. NDH-1 is composed of 14 different subunits. Subunits NuoA, H, J, K, L, M, N constitute the membrane sector of the complex.

The protein resides in the cell inner membrane. It catalyses the reaction a quinone + NADH + 5 H(+)(in) = a quinol + NAD(+) + 4 H(+)(out). In terms of biological role, NDH-1 shuttles electrons from NADH, via FMN and iron-sulfur (Fe-S) centers, to quinones in the respiratory chain. The immediate electron acceptor for the enzyme in this species is believed to be ubiquinone. Couples the redox reaction to proton translocation (for every two electrons transferred, four hydrogen ions are translocated across the cytoplasmic membrane), and thus conserves the redox energy in a proton gradient. The sequence is that of NADH-quinone oxidoreductase subunit K from Myxococcus xanthus (strain DK1622).